The following is a 298-amino-acid chain: Nucleotide-binding protein Csal_2229 (298 aa).

An ATP-binding site is contributed by 8 to 15; it reads GRSGSGKS. 59-62 is a binding site for GTP; that stretch reads DARN.

It belongs to the RapZ-like family.

In terms of biological role, displays ATPase and GTPase activities. This Chromohalobacter salexigens (strain ATCC BAA-138 / DSM 3043 / CIP 106854 / NCIMB 13768 / 1H11) protein is Nucleotide-binding protein Csal_2229.